Reading from the N-terminus, the 61-residue chain is Small ribosomal subunit protein uS14 (61 aa).

Residues Cys24, Cys27, Cys40, and Cys43 each coordinate Zn(2+).

It belongs to the universal ribosomal protein uS14 family. Zinc-binding uS14 subfamily. Part of the 30S ribosomal subunit. Contacts proteins S3 and S10. The cofactor is Zn(2+).

Its function is as follows. Binds 16S rRNA, required for the assembly of 30S particles and may also be responsible for determining the conformation of the 16S rRNA at the A site. The polypeptide is Small ribosomal subunit protein uS14 (Desulforamulus reducens (strain ATCC BAA-1160 / DSM 100696 / MI-1) (Desulfotomaculum reducens)).